The chain runs to 517 residues: L-amino-acid oxidase (517 aa).

Residues 1–19 (MNVFSIFSLVFLAAFGSCA) form the signal peptide. A disulfide bridge links C29 with C192. FAD contacts are provided by residues 62-63 (MA), 82-83 (EA), R90, and 106-109 (GPMR). R109 lines the substrate pocket. The N-linked (GlcNAc...) asparagine glycan is linked to N191. Residue V280 coordinates FAD. A disulfide bridge links C350 with C431. A glycan (N-linked (GlcNAc...) asparagine) is linked at N380. Residue Y391 coordinates substrate. Residues E476 and 483–488 (GWLDST) each bind FAD. Residue 483–484 (GW) coordinates substrate.

The protein belongs to the flavin monoamine oxidase family. FIG1 subfamily. As to quaternary structure, monomer. This is in contrast with most of its orthologs, that are non-covalently linked homodimers. It depends on FAD as a cofactor. N-glycosylated. Expressed by the venom gland.

It is found in the secreted. The enzyme catalyses an L-alpha-amino acid + O2 + H2O = a 2-oxocarboxylate + H2O2 + NH4(+). It carries out the reaction L-leucine + O2 + H2O = 4-methyl-2-oxopentanoate + H2O2 + NH4(+). It catalyses the reaction L-phenylalanine + O2 + H2O = 3-phenylpyruvate + H2O2 + NH4(+). The catalysed reaction is L-tryptophan + O2 + H2O = indole-3-pyruvate + H2O2 + NH4(+). The enzyme catalyses L-methionine + O2 + H2O = 4-methylsulfanyl-2-oxobutanoate + H2O2 + NH4(+). It carries out the reaction L-isoleucine + O2 + H2O = (S)-3-methyl-2-oxopentanoate + H2O2 + NH4(+). It catalyses the reaction L-arginine + O2 + H2O = 5-guanidino-2-oxopentanoate + H2O2 + NH4(+). The catalysed reaction is L-aspartate + O2 + H2O = oxaloacetate + H2O2 + NH4(+). The enzyme catalyses L-histidine + O2 + H2O = 3-(imidazol-5-yl)pyruvate + H2O2 + NH4(+). It carries out the reaction L-asparagine + O2 + H2O = 2-oxosuccinamate + H2O2 + NH4(+). It catalyses the reaction L-tyrosine + O2 + H2O = 3-(4-hydroxyphenyl)pyruvate + H2O2 + NH4(+). The catalysed reaction is L-glutamine + O2 + H2O = 2-oxoglutaramate + H2O2 + NH4(+). The enzyme catalyses L-alanine + O2 + H2O = pyruvate + H2O2 + NH4(+). It carries out the reaction L-lysine + O2 + H2O = 6-amino-2-oxohexanoate + H2O2 + NH4(+). It catalyses the reaction L-glutamate + O2 + H2O = H2O2 + 2-oxoglutarate + NH4(+). Functionally, catalyzes an oxidative deamination of predominantly hydrophobic and aromatic L-amino acids, thus producing hydrogen peroxide that may contribute to the diverse toxic effects of this enzyme. Is highly active against L-Tyr, L-Asp, L-Phe, L-Glu, L-Trp, L-His, L-Gln, L-Ile, L-Met, L-Leu and moderately active against L-Lys, L-Arg, L-Ala and L-Asn. Exhibits diverse biological activities, such as edema, inflammatory cell infiltration, cytotoxicity and apoptosis, as well as induction of platelet aggregation. Effects of snake L-amino oxidases on platelets are controversial, since they either induce aggregation or inhibit agonist-induced aggregation. These different effects are probably due to different experimental conditions. This protein may also induce hemorrhage, hemolysis, and have antibacterial and antiparasitic activities. In Bungarus fasciatus (Banded krait), this protein is L-amino-acid oxidase.